Consider the following 515-residue polypeptide: Alpha,alpha-trehalose-phosphate synthase [UDP-forming] 1 (515 aa).

D-glucose 6-phosphate contacts are provided by Tyr-97 and Asp-151. UDP-binding residues include Arg-287 and Lys-292. Arg-287 and Lys-292 together coordinate UDP-alpha-D-glucose. Position 325 (Arg-325) interacts with D-glucose 6-phosphate. Residues Val-364 and 390 to 394 each bind UDP; that span reads LVAYE. 386 to 394 contributes to the UDP-alpha-D-glucose binding site; sequence DGMNLVAYE. Residues 483–515 are disordered; that stretch reads GKFQSRKAKLPESADAEKPMNGSGESEESQTTQ. The span at 491-500 shows a compositional bias: basic and acidic residues; the sequence is KLPESADAEK.

This sequence belongs to the glycosyltransferase 20 family.

The catalysed reaction is D-glucose 6-phosphate + UDP-alpha-D-glucose = alpha,alpha-trehalose 6-phosphate + UDP + H(+). It participates in carbohydrate biosynthesis. Synthase catalytic subunit of the trehalose synthase complex that catalyzes the production of trehalose from glucose-6-phosphate and UDP-alpha-D-glucose in a two step process. The disaccharide trehalose serves as a storage carbohydrate that is mobilized during conidial germination. Regulates the level of trehalose as a protectant for cell integrity during thermal and oxidative stress. The polypeptide is Alpha,alpha-trehalose-phosphate synthase [UDP-forming] 1 (Aspergillus fumigatus (strain ATCC MYA-4609 / CBS 101355 / FGSC A1100 / Af293) (Neosartorya fumigata)).